The sequence spans 276 residues: MAVVTMKQLLDSGTHFGHQTRRWNPKMKRFIFTDRNGIYIIDLQQTLTFIDKAYEFVKETVAHGGTVLFVGTKKQAQESIAAEATRVGMPYVNQRWLGGMLTNFSTVHKRLQRLKELEAMEQTGGFEGRTKKEILGLTREKNKLERSLGGIRDMSKVPSAIWVVDTNKEHIAVGEARKLGIPVIAILDTNCDPDEVDYPIPGNDDAIRSAALLTKVIASAVAEGLQARAGVGRGDGKPEVEAAEPLAEWEQELLASATATAAPTEAGAPEPTTDPS.

The interval 255–276 is disordered; sequence ASATATAAPTEAGAPEPTTDPS.

Belongs to the universal ribosomal protein uS2 family.

The chain is Small ribosomal subunit protein uS2 from Mycolicibacterium paratuberculosis (strain ATCC BAA-968 / K-10) (Mycobacterium paratuberculosis).